We begin with the raw amino-acid sequence, 365 residues long: UDP-N-acetylglucosamine--N-acetylmuramyl-(pentapeptide) pyrophosphoryl-undecaprenol N-acetylglucosamine transferase (365 aa).

UDP-N-acetyl-alpha-D-glucosamine is bound by residues 12 to 14, Asn-123, Arg-166, Ser-194, and Gln-295; that span reads TGG.

Belongs to the glycosyltransferase 28 family. MurG subfamily.

It is found in the cell inner membrane. It carries out the reaction di-trans,octa-cis-undecaprenyl diphospho-N-acetyl-alpha-D-muramoyl-L-alanyl-D-glutamyl-meso-2,6-diaminopimeloyl-D-alanyl-D-alanine + UDP-N-acetyl-alpha-D-glucosamine = di-trans,octa-cis-undecaprenyl diphospho-[N-acetyl-alpha-D-glucosaminyl-(1-&gt;4)]-N-acetyl-alpha-D-muramoyl-L-alanyl-D-glutamyl-meso-2,6-diaminopimeloyl-D-alanyl-D-alanine + UDP + H(+). Its pathway is cell wall biogenesis; peptidoglycan biosynthesis. In terms of biological role, cell wall formation. Catalyzes the transfer of a GlcNAc subunit on undecaprenyl-pyrophosphoryl-MurNAc-pentapeptide (lipid intermediate I) to form undecaprenyl-pyrophosphoryl-MurNAc-(pentapeptide)GlcNAc (lipid intermediate II). The polypeptide is UDP-N-acetylglucosamine--N-acetylmuramyl-(pentapeptide) pyrophosphoryl-undecaprenol N-acetylglucosamine transferase (Phenylobacterium zucineum (strain HLK1)).